The chain runs to 121 residues: Autophagy-related protein 8 (121 aa).

Gly116 carries Phosphatidylethanolamine amidated glycine lipidation. Residues 117–121 (DFETA) constitute a propeptide, removed in mature form.

Belongs to the ATG8 family. Post-translationally, the C-terminal 5 residues are removed to expose Gly-116 at the C-terminus. The C-terminal Gly is then amidated with phosphatidylethanolamine by an activating system similar to that for ubiquitin.

It is found in the cytoplasmic vesicle. It localises to the autophagosome membrane. The protein resides in the vacuole membrane. Ubiquitin-like modifier involved in autophagosome formation. With cpr-1/atg4, mediates the delivery of the autophagosomes to the vacuole via the microtubule cytoskeleton. Required for selective autophagic degradation of the nucleus (nucleophagy) as well as for mitophagy which contributes to regulate mitochondrial quantity and quality by eliminating the mitochondria to a basal level to fulfill cellular energy requirements and preventing excess ROS production. Also participates in membrane fusion events that take place in the early secretory pathway. Also involved in endoplasmic reticulum-specific autophagic process and is essential for the survival of cells subjected to severe ER stress. The apg-6/atg8-PE conjugate mediates tethering between adjacent membranes and stimulates membrane hemifusion, leading to expansion of the autophagosomal membrane during autophagy. In Neurospora crassa (strain ATCC 24698 / 74-OR23-1A / CBS 708.71 / DSM 1257 / FGSC 987), this protein is Autophagy-related protein 8 (apg-6).